The primary structure comprises 147 residues: Peptide methionine sulfoxide reductase MsrB (147 aa).

One can recognise a MsrB domain in the interval 8–131; the sequence is KEELKKILTE…NSASLKFIPK (124 aa). The active-site Nucleophile is the Cys120.

It belongs to the MsrB Met sulfoxide reductase family.

The enzyme catalyses L-methionyl-[protein] + [thioredoxin]-disulfide + H2O = L-methionyl-(R)-S-oxide-[protein] + [thioredoxin]-dithiol. This is Peptide methionine sulfoxide reductase MsrB from Clostridium perfringens (strain SM101 / Type A).